The following is a 261-amino-acid chain: Protein FAM216A (261 aa).

Positions 1-52 (MPSRCPGVAGPPALARTEGSEGSAGQSYHQNSKGTGEQHKAERIKEGHRMSS) are disordered. The segment covering 23 to 35 (SAGQSYHQNSKGT) has biased composition (polar residues). Over residues 36–49 (GEQHKAERIKEGHR) the composition is skewed to basic and acidic residues.

This sequence belongs to the FAM216 family.

This Rattus norvegicus (Rat) protein is Protein FAM216A (Fam216a).